The sequence spans 235 residues: Ubiquinone/menaquinone biosynthesis C-methyltransferase UbiE (235 aa).

Positions 59, 84, and 123 each coordinate S-adenosyl-L-methionine.

Belongs to the class I-like SAM-binding methyltransferase superfamily. MenG/UbiE family.

The catalysed reaction is a 2-demethylmenaquinol + S-adenosyl-L-methionine = a menaquinol + S-adenosyl-L-homocysteine + H(+). The enzyme catalyses a 2-methoxy-6-(all-trans-polyprenyl)benzene-1,4-diol + S-adenosyl-L-methionine = a 5-methoxy-2-methyl-3-(all-trans-polyprenyl)benzene-1,4-diol + S-adenosyl-L-homocysteine + H(+). It participates in quinol/quinone metabolism; menaquinone biosynthesis; menaquinol from 1,4-dihydroxy-2-naphthoate: step 2/2. The protein operates within cofactor biosynthesis; ubiquinone biosynthesis. Functionally, methyltransferase required for the conversion of demethylmenaquinol (DMKH2) to menaquinol (MKH2) and the conversion of 2-polyprenyl-6-methoxy-1,4-benzoquinol (DDMQH2) to 2-polyprenyl-3-methyl-6-methoxy-1,4-benzoquinol (DMQH2). The sequence is that of Ubiquinone/menaquinone biosynthesis C-methyltransferase UbiE from Campylobacter jejuni subsp. jejuni serotype O:23/36 (strain 81-176).